We begin with the raw amino-acid sequence, 431 residues long: Serine/threonine-protein kinase Sgk1 (431 aa).

Residues 1–60 are necessary for localization to the mitochondria; the sequence is MTVKTEAAKGTLTYSRMRGMVAILIAFMKQRRMGLNDFIQKIANNSYACKHPEVQSILKI. The tract at residues 66–92 is disordered; sequence PELMNANPSPPPSPSQQINLGPSSNPH. Position 74 is a phosphoserine (serine 74). Position 78 is a phosphoserine; by MAPK7 (serine 78). A compositionally biased stretch (polar residues) spans 81-91; sequence QQINLGPSSNP. The 258-residue stretch at 98–355 folds into the Protein kinase domain; that stretch reads FHFLKVIGKG…FMEIKSHVFF (258 aa). Residues 104–112 and lysine 127 each bind ATP; that span reads IGKGSFGKV. The short motif at 131-141 is the Nuclear localization signal element; the sequence is KKAILKKKEEK. Catalysis depends on aspartate 222, which acts as the Proton acceptor. Residue threonine 256 is modified to Phosphothreonine; by PDPK1. The region spanning 356 to 431 is the AGC-kinase C-terminal domain; the sequence is SLINWDDLIN…SYAPPTDSFL (76 aa). Threonine 369 bears the Phosphothreonine; by PKA mark. Phosphoserine occurs at positions 397, 401, and 422.

This sequence belongs to the protein kinase superfamily. AGC Ser/Thr protein kinase family. In terms of assembly, homodimer; disulfide-linked. Forms a trimeric complex with FBXW7 and NOTCH1. Interacts with MAPK3/ERK1, MAPK1/ERK2, MAP2K1/MEK1, MAP2K2/MEK2, NEDD4, NEDD4L, MAPT/TAU, MAPK7, CREB1, SLC9A3R2/NHERF2 and KCNJ1/ROMK1. Associates with the mammalian target of rapamycin complex 2 (mTORC2) via an interaction with MAPKAP1/SIN1. Regulated by phosphorylation. Activated by phosphorylation on Ser-422 by mTORC2, transforming it into a substrate for PDPK1 which phosphorylates it on Thr-256. Phosphorylation on Ser-397 and Ser-401 are also essential for its activity. Phosphorylation on Ser-78 by MAPK7 is required for growth factor-induced cell cycle progression. Post-translationally, ubiquitinated by NEDD4L; which promotes proteasomal degradation. Ubiquitinated by SYVN1 at the endoplasmic reticulum; which promotes rapid proteasomal degradation and maintains a high turnover rate in resting cells. Isoform 2 shows enhanced stability. In terms of tissue distribution, expressed in most tissues with highest levels in the pancreas, followed by placenta, kidney and lung. Isoform 2 is strongly expressed in brain and pancreas, weaker in heart, placenta, lung, liver and skeletal muscle.

Its subcellular location is the cytoplasm. The protein localises to the nucleus. It is found in the endoplasmic reticulum membrane. It localises to the cell membrane. The protein resides in the mitochondrion. It catalyses the reaction L-seryl-[protein] + ATP = O-phospho-L-seryl-[protein] + ADP + H(+). The enzyme catalyses L-threonyl-[protein] + ATP = O-phospho-L-threonyl-[protein] + ADP + H(+). Two specific sites, one in the kinase domain (Thr-256) and the other in the C-terminal regulatory region (Ser-422), need to be phosphorylated for its full activation. Phosphorylation at Ser-397 and Ser-401 are also essential for its activity. Activated by WNK1, WNK2, WNK3 and WNK4; which promote phosphorylation by mTORC2. Its function is as follows. Serine/threonine-protein kinase which is involved in the regulation of a wide variety of ion channels, membrane transporters, cellular enzymes, transcription factors, neuronal excitability, cell growth, proliferation, survival, migration and apoptosis. Plays an important role in cellular stress response. Contributes to regulation of renal Na(+) retention, renal K(+) elimination, salt appetite, gastric acid secretion, intestinal Na(+)/H(+) exchange and nutrient transport, insulin-dependent salt sensitivity of blood pressure, salt sensitivity of peripheral glucose uptake, cardiac repolarization and memory consolidation. Up-regulates Na(+) channels: SCNN1A/ENAC, SCN5A and ASIC1/ACCN2, K(+) channels: KCNJ1/ROMK1, KCNA1-5, KCNQ1-5 and KCNE1, epithelial Ca(2+) channels: TRPV5 and TRPV6, chloride channels: BSND, CLCN2 and CFTR, glutamate transporters: SLC1A3/EAAT1, SLC1A2 /EAAT2, SLC1A1/EAAT3, SLC1A6/EAAT4 and SLC1A7/EAAT5, amino acid transporters: SLC1A5/ASCT2, SLC38A1/SN1 and SLC6A19, creatine transporter: SLC6A8, Na(+)/dicarboxylate cotransporter: SLC13A2/NADC1, Na(+)-dependent phosphate cotransporter: SLC34A2/NAPI-2B, glutamate receptor: GRIK2/GLUR6. Up-regulates carriers: SLC9A3/NHE3, SLC12A1/NKCC2, SLC12A3/NCC, SLC5A3/SMIT, SLC2A1/GLUT1, SLC5A1/SGLT1 and SLC15A2/PEPT2. Regulates enzymes: GSK3A/B, PMM2 and Na(+)/K(+) ATPase, and transcription factors: CTNNB1 and nuclear factor NF-kappa-B. Stimulates sodium transport into epithelial cells by enhancing the stability and expression of SCNN1A/ENAC. This is achieved by phosphorylating the NEDD4L ubiquitin E3 ligase, promoting its interaction with 14-3-3 proteins, thereby preventing it from binding to SCNN1A/ENAC and targeting it for degradation. Regulates store-operated Ca(+2) entry (SOCE) by stimulating ORAI1 and STIM1. Regulates KCNJ1/ROMK1 directly via its phosphorylation or indirectly via increased interaction with SLC9A3R2/NHERF2. Phosphorylates MDM2 and activates MDM2-dependent ubiquitination of p53/TP53. Phosphorylates MAPT/TAU and mediates microtubule depolymerization and neurite formation in hippocampal neurons. Phosphorylates SLC2A4/GLUT4 and up-regulates its activity. Phosphorylates APBB1/FE65 and promotes its localization to the nucleus. Phosphorylates MAPK1/ERK2 and activates it by enhancing its interaction with MAP2K1/MEK1 and MAP2K2/MEK2. Phosphorylates FBXW7 and plays an inhibitory role in the NOTCH1 signaling. Phosphorylates FOXO1 resulting in its relocalization from the nucleus to the cytoplasm. Phosphorylates FOXO3, promoting its exit from the nucleus and interference with FOXO3-dependent transcription. Phosphorylates BRAF and MAP3K3/MEKK3 and inhibits their activity. Phosphorylates SLC9A3/NHE3 in response to dexamethasone, resulting in its activation and increased localization at the cell membrane. Phosphorylates CREB1. Necessary for vascular remodeling during angiogenesis. Sustained high levels and activity may contribute to conditions such as hypertension and diabetic nephropathy. Isoform 2 exhibited a greater effect on cell plasma membrane expression of SCNN1A/ENAC and Na(+) transport than isoform 1. The chain is Serine/threonine-protein kinase Sgk1 (SGK1) from Homo sapiens (Human).